A 431-amino-acid chain; its full sequence is Enolase (431 aa).

Glutamine 167 is a (2R)-2-phosphoglycerate binding site. Glutamate 209 functions as the Proton donor in the catalytic mechanism. Mg(2+) is bound by residues aspartate 246, glutamate 289, and aspartate 316. Lysine 341, arginine 370, serine 371, and lysine 392 together coordinate (2R)-2-phosphoglycerate. Lysine 341 (proton acceptor) is an active-site residue.

Belongs to the enolase family. As to quaternary structure, component of the RNA degradosome, a multiprotein complex involved in RNA processing and mRNA degradation. It depends on Mg(2+) as a cofactor.

It is found in the cytoplasm. Its subcellular location is the secreted. It localises to the cell surface. The enzyme catalyses (2R)-2-phosphoglycerate = phosphoenolpyruvate + H2O. The protein operates within carbohydrate degradation; glycolysis; pyruvate from D-glyceraldehyde 3-phosphate: step 4/5. Functionally, catalyzes the reversible conversion of 2-phosphoglycerate (2-PG) into phosphoenolpyruvate (PEP). It is essential for the degradation of carbohydrates via glycolysis. This Hahella chejuensis (strain KCTC 2396) protein is Enolase.